Consider the following 264-residue polypeptide: 3-methyl-2-oxobutanoate hydroxymethyltransferase (264 aa).

Mg(2+) is bound by residues D45 and D84. 3-methyl-2-oxobutanoate contacts are provided by residues 45 to 46 (DS), D84, and K112. E114 contacts Mg(2+). E181 acts as the Proton acceptor in catalysis.

This sequence belongs to the PanB family. As to quaternary structure, homodecamer; pentamer of dimers. Requires Mg(2+) as cofactor.

The protein resides in the cytoplasm. It carries out the reaction 3-methyl-2-oxobutanoate + (6R)-5,10-methylene-5,6,7,8-tetrahydrofolate + H2O = 2-dehydropantoate + (6S)-5,6,7,8-tetrahydrofolate. Its pathway is cofactor biosynthesis; (R)-pantothenate biosynthesis; (R)-pantoate from 3-methyl-2-oxobutanoate: step 1/2. Its function is as follows. Catalyzes the reversible reaction in which hydroxymethyl group from 5,10-methylenetetrahydrofolate is transferred onto alpha-ketoisovalerate to form ketopantoate. This is 3-methyl-2-oxobutanoate hydroxymethyltransferase from Shewanella sp. (strain MR-4).